Reading from the N-terminus, the 374-residue chain is Methylthioribose-1-phosphate isomerase (374 aa).

The Proton donor role is filled by Asp-256.

The protein belongs to the eIF-2B alpha/beta/delta subunits family. MtnA subfamily.

Its subcellular location is the cytoplasm. It is found in the nucleus. It catalyses the reaction 5-(methylsulfanyl)-alpha-D-ribose 1-phosphate = 5-(methylsulfanyl)-D-ribulose 1-phosphate. It functions in the pathway amino-acid biosynthesis; L-methionine biosynthesis via salvage pathway; L-methionine from S-methyl-5-thio-alpha-D-ribose 1-phosphate: step 1/6. Its function is as follows. Catalyzes the interconversion of methylthioribose-1-phosphate (MTR-1-P) into methylthioribulose-1-phosphate (MTRu-1-P). The protein is Methylthioribose-1-phosphate isomerase of Leishmania braziliensis.